The primary structure comprises 258 residues: UPF0246 protein YaaA (258 aa).

The protein belongs to the UPF0246 family.

The polypeptide is UPF0246 protein YaaA (Shigella sonnei (strain Ss046)).